Reading from the N-terminus, the 212-residue chain is Protein GET1 (212 aa).

The Lumenal portion of the chain corresponds to 1-4 (MASL). A helical transmembrane segment spans residues 5 to 24 (LLFVLVIQIITYLINTIGAR). Topologically, residues 25–110 (TIDSLLWLLY…SFDWTIKTVR (86 aa)) are cytoplasmic. Residues 75-99 (AKLRRRHDKAMEEYDVKNKKLSALK) adopt a coiled-coil conformation. A helical membrane pass occupies residues 111 to 131 (WVSTTGVTVILQFWFSKSPIF). Residues 132-155 (DLPRGWLPWQVEWILSFPRAPLGT) are Lumenal-facing. Residues 156–172 (VSIQVWGGACGTVIALV) traverse the membrane as a helical segment. The Cytoplasmic segment spans residues 173 to 212 (GGAMGVAAPAFKKINQPRGEAQKMGTPRGSREQTPVRKTQ). The segment at 189–212 (PRGEAQKMGTPRGSREQTPVRKTQ) is disordered. Residues 201–212 (GSREQTPVRKTQ) are compositionally biased toward basic and acidic residues.

Belongs to the WRB/GET1 family. As to quaternary structure, interacts with GET3.

Its subcellular location is the endoplasmic reticulum membrane. Required for the post-translational delivery of tail-anchored (TA) proteins to the endoplasmic reticulum. Acts as a membrane receptor for soluble GET3, which recognizes and selectively binds the transmembrane domain of TA proteins in the cytosol. The sequence is that of Protein GET1 from Arthroderma otae (strain ATCC MYA-4605 / CBS 113480) (Microsporum canis).